Here is a 596-residue protein sequence, read N- to C-terminus: Elongation factor 4 (596 aa).

The tr-type G domain maps to 2–184 (KHIRNFSIIA…TIVAQIPPPE (183 aa)). GTP contacts are provided by residues 14–19 (DHGKST) and 131–134 (NKID).

Belongs to the TRAFAC class translation factor GTPase superfamily. Classic translation factor GTPase family. LepA subfamily.

It localises to the cell inner membrane. The enzyme catalyses GTP + H2O = GDP + phosphate + H(+). In terms of biological role, required for accurate and efficient protein synthesis under certain stress conditions. May act as a fidelity factor of the translation reaction, by catalyzing a one-codon backward translocation of tRNAs on improperly translocated ribosomes. Back-translocation proceeds from a post-translocation (POST) complex to a pre-translocation (PRE) complex, thus giving elongation factor G a second chance to translocate the tRNAs correctly. Binds to ribosomes in a GTP-dependent manner. In Shewanella loihica (strain ATCC BAA-1088 / PV-4), this protein is Elongation factor 4.